We begin with the raw amino-acid sequence, 571 residues long: Chondroitin sulfate proteoglycan 5 (571 aa).

Residues 1 to 30 form the signal peptide; it reads MGRAGGGGPGWGPPPVLLLLGVTLVLTAGA. Over 31–428 the chain is Extracellular; the sequence is VPAREAGSAI…SIITDFQVMC (398 aa). Serine 38 carries an O-linked (Xyl...) (chondroitin sulfate) serine glycan. Asparagine 57 carries N-linked (GlcNAc...) asparagine glycosylation. A disordered region spans residues 57–91; it reads NDTREEAGLPAAGEDETSWTERGSELAAVGPGVGP. O-linked (GalNAc...) threonine glycosylation is present at threonine 76. O-linked (Xyl...) (chondroitin sulfate) serine glycosylation occurs at serine 123. An O-linked (GalNAc...) threonine glycan is attached at threonine 132. Disordered stretches follow at residues 137–169, 186–254, and 279–357; these read DEALGSSTMPPAIPEATEASGPPSPTLRDKPSL, GGST…TPSW, and DDLE…DLAT. Serine 143 carries O-linked (GalNAc...) serine glycosylation. Residues threonine 144 and threonine 153 are each glycosylated (O-linked (GalNAc...) threonine). O-linked (GalNAc...) serine glycosylation is found at serine 156 and serine 160. O-linked (GalNAc...) threonine glycans are attached at residues threonine 162 and threonine 198. Acidic residues predominate over residues 214 to 223; the sequence is IDIDYFEGLD. Threonine 240 carries an O-linked (GalNAc...) threonine glycan. Positions 270-306 are interaction with TNC and TNR; the sequence is DFYPTTSFYDDLEEEEEEEEDKDAVGGGDLEDESDLL. Residues 279 to 291 show a composition bias toward acidic residues; the sequence is DDLEEEEEEEEDK. 2 O-linked (GalNAc...) threonine glycosylation sites follow: threonine 318 and threonine 322. Asparagine 372 is a glycosylation site (N-linked (GlcNAc...) asparagine). Residues 376-418 form the EGF-like domain; sequence RSVCDLFPSYCHNGGQCYLVENIGAFCRCNTQDYIWHKGMRCE. Intrachain disulfides connect cysteine 379/cysteine 392, cysteine 386/cysteine 402, and cysteine 404/cysteine 417. A helical transmembrane segment spans residues 429 to 449; the sequence is VAVGSAALVLLLLFMMTVFFA. The tract at residues 447 to 465 is interaction with GOPC; the sequence is FFAKKLYLLKTENTKLRRT. The Cytoplasmic portion of the chain corresponds to 450–571; the sequence is KKLYLLKTEN…EVNCLQNNLT (122 aa). Serine 472, serine 480, serine 488, and serine 548 each carry phosphoserine. Residues 538-563 form a disordered region; it reads EESFNIQNSMSPKLEGGKGDQDDLEV.

In terms of assembly, interacts with ERBB3 and GOPC. Binds TNR and probably TNC. Interacts with MDK; this interaction is independent of the presence of chondroitin sulfate chains and promotes elongation of oligodendroglial precursor-like cells. Post-translationally, N-glycosylated. In terms of processing, O-glycosylated; contains chondroitin sulfate glycans. Part-time proteoglycan, expressed in part as a proteoglycan exhibiting chondroitin sulfate glycans and in part as a non-proteoglycan form. The relative amount of both forms depends on tissues and tissue maturation. Phosphorylated; in intracellular and extracellular parts. As to expression, expressed in cerebral cortex and cerebellum. Expressed in retina (at protein level).

It is found in the cell membrane. Its subcellular location is the synaptic cell membrane. The protein resides in the endoplasmic reticulum membrane. The protein localises to the golgi apparatus membrane. It localises to the cell surface. It is found in the secreted. Its function is as follows. May function as a growth and differentiation factor involved in neuritogenesis. May induce ERBB3 activation. The sequence is that of Chondroitin sulfate proteoglycan 5 (Cspg5) from Rattus norvegicus (Rat).